The sequence spans 914 residues: TRPM8 channel-associated factor 3 (914 aa).

Residues 533–832 enclose the Peptidase M60 domain; it reads NSWVSTGLYL…TYLQLQEGFG (300 aa).

It belongs to the TCAF family. As to expression, prostate-specific. Present in both dorso-lateral and anterior prostate.

May play a role in the regulation of the cation channel TRPM8 activity. The polypeptide is TRPM8 channel-associated factor 3 (Mus musculus (Mouse)).